Consider the following 301-residue polypeptide: Indole-3-glycerol phosphate synthase (301 aa).

This sequence belongs to the TrpC family.

The catalysed reaction is 1-(2-carboxyphenylamino)-1-deoxy-D-ribulose 5-phosphate + H(+) = (1S,2R)-1-C-(indol-3-yl)glycerol 3-phosphate + CO2 + H2O. It participates in amino-acid biosynthesis; L-tryptophan biosynthesis; L-tryptophan from chorismate: step 4/5. This chain is Indole-3-glycerol phosphate synthase, found in Prochlorococcus marinus (strain MIT 9313).